The chain runs to 345 residues: Aspartate--ammonia ligase (345 aa).

This sequence belongs to the class-II aminoacyl-tRNA synthetase family. AsnA subfamily.

It localises to the cytoplasm. It catalyses the reaction L-aspartate + NH4(+) + ATP = L-asparagine + AMP + diphosphate + H(+). The protein operates within amino-acid biosynthesis; L-asparagine biosynthesis; L-asparagine from L-aspartate (ammonia route): step 1/1. The protein is Aspartate--ammonia ligase of Parabacteroides distasonis (strain ATCC 8503 / DSM 20701 / CIP 104284 / JCM 5825 / NCTC 11152).